The sequence spans 76 residues: Putative membrane protein insertion efficiency factor (76 aa).

The protein belongs to the UPF0161 family.

It is found in the cell inner membrane. Functionally, could be involved in insertion of integral membrane proteins into the membrane. This chain is Putative membrane protein insertion efficiency factor, found in Anaeromyxobacter dehalogenans (strain 2CP-C).